The primary structure comprises 235 residues: Ribitol-5-phosphate cytidylyltransferase (235 aa).

Residues 7–10, 82–88, and serine 113 each bind CTP; these read LAGG and GADRNTS.

Belongs to the IspD/TarI cytidylyltransferase family. TarI subfamily.

It catalyses the reaction D-ribitol 5-phosphate + CTP + H(+) = CDP-L-ribitol + diphosphate. Its pathway is cell wall biogenesis; poly(ribitol phosphate) teichoic acid biosynthesis. Catalyzes the transfer of the cytidylyl group of CTP to D-ribitol 5-phosphate. This Streptococcus pneumoniae (strain CGSP14) protein is Ribitol-5-phosphate cytidylyltransferase.